Consider the following 198-residue polypeptide: dTTP/UTP pyrophosphatase (198 aa).

Aspartate 72 serves as the catalytic Proton acceptor.

Belongs to the Maf family. YhdE subfamily. It depends on a divalent metal cation as a cofactor.

The protein resides in the cytoplasm. It catalyses the reaction dTTP + H2O = dTMP + diphosphate + H(+). The enzyme catalyses UTP + H2O = UMP + diphosphate + H(+). In terms of biological role, nucleoside triphosphate pyrophosphatase that hydrolyzes dTTP and UTP. May have a dual role in cell division arrest and in preventing the incorporation of modified nucleotides into cellular nucleic acids. In Pseudomonas fluorescens (strain Pf0-1), this protein is dTTP/UTP pyrophosphatase.